Consider the following 226-residue polypeptide: Phosphoglycolate phosphatase (226 aa).

Aspartate 10 functions as the Nucleophile in the catalytic mechanism. Positions 10, 12, and 175 each coordinate Mg(2+).

It belongs to the HAD-like hydrolase superfamily. CbbY/CbbZ/Gph/YieH family. Requires Mg(2+) as cofactor.

It carries out the reaction 2-phosphoglycolate + H2O = glycolate + phosphate. It functions in the pathway organic acid metabolism; glycolate biosynthesis; glycolate from 2-phosphoglycolate: step 1/1. Specifically catalyzes the dephosphorylation of 2-phosphoglycolate. Is involved in the dissimilation of the intracellular 2-phosphoglycolate formed during the DNA repair of 3'-phosphoglycolate ends, a major class of DNA lesions induced by oxidative stress. This is Phosphoglycolate phosphatase from Vibrio cholerae serotype O1 (strain ATCC 39315 / El Tor Inaba N16961).